The chain runs to 422 residues: Phospho-N-acetylmuramoyl-pentapeptide-transferase (422 aa).

Helical transmembrane passes span 28–48, 71–91, 95–115, 136–156, 211–231, 246–266, 279–299, 313–333, and 399–419; these read LMAI…FINL, VGVP…PCLL, LHNI…SLGF, IIGQ…SPDV, AGWI…SNGA, AIIG…EFAG, LVIF…YNAY, IGGI…IPIL, and KITV…IITL.

It belongs to the glycosyltransferase 4 family. MraY subfamily. Mg(2+) serves as cofactor.

The protein localises to the cell inner membrane. It carries out the reaction UDP-N-acetyl-alpha-D-muramoyl-L-alanyl-gamma-D-glutamyl-meso-2,6-diaminopimeloyl-D-alanyl-D-alanine + di-trans,octa-cis-undecaprenyl phosphate = di-trans,octa-cis-undecaprenyl diphospho-N-acetyl-alpha-D-muramoyl-L-alanyl-D-glutamyl-meso-2,6-diaminopimeloyl-D-alanyl-D-alanine + UMP. It functions in the pathway cell wall biogenesis; peptidoglycan biosynthesis. Catalyzes the initial step of the lipid cycle reactions in the biosynthesis of the cell wall peptidoglycan: transfers peptidoglycan precursor phospho-MurNAc-pentapeptide from UDP-MurNAc-pentapeptide onto the lipid carrier undecaprenyl phosphate, yielding undecaprenyl-pyrophosphoryl-MurNAc-pentapeptide, known as lipid I. This chain is Phospho-N-acetylmuramoyl-pentapeptide-transferase, found in Bacteroides fragilis (strain ATCC 25285 / DSM 2151 / CCUG 4856 / JCM 11019 / LMG 10263 / NCTC 9343 / Onslow / VPI 2553 / EN-2).